Consider the following 98-residue polypeptide: NADH-ubiquinone oxidoreductase chain 4L (98 aa).

3 consecutive transmembrane segments (helical) span residues 1–21 (MPYI…GTLM), 29–49 (SLLC…LLSL), and 61–81 (LILL…LVMI).

This sequence belongs to the complex I subunit 4L family. Core subunit of respiratory chain NADH dehydrogenase (Complex I) which is composed of 45 different subunits.

The protein resides in the mitochondrion inner membrane. The enzyme catalyses a ubiquinone + NADH + 5 H(+)(in) = a ubiquinol + NAD(+) + 4 H(+)(out). Its function is as follows. Core subunit of the mitochondrial membrane respiratory chain NADH dehydrogenase (Complex I) which catalyzes electron transfer from NADH through the respiratory chain, using ubiquinone as an electron acceptor. Part of the enzyme membrane arm which is embedded in the lipid bilayer and involved in proton translocation. This is NADH-ubiquinone oxidoreductase chain 4L (MT-ND4L) from Loxodonta africana (African elephant).